We begin with the raw amino-acid sequence, 297 residues long: MSAVEAPSASQAIWPELTEDHPLSQLNSRLPTILSEAGHSQIWGVTLTYSTPPTFSSLIILQKFLRSVDNNVDEAATALGKTLKWRKDWGLDARADKKEKENFGPDFEGLGYVTKIKKNDGGDEIVTWNVYGAVKDLKSTFGDLDRFLRWRVNLMEEAIAHLHLATTSTPIPDFNAGIDPHRMAQVHLYEGVSFLRMDPHVKAASKATIELMAANYPELLSRKFFVGVPLIMSWMFQAVRMFVSAETAKKFVVISYKENLANELGELEGVPKEYGGKGLSLGELQNQLRGEDAVTSS.

Residues 106 to 282 (DFEGLGYVTK…EYGGKGLSLG (177 aa)) enclose the CRAL-TRIO domain. Residues Tyr131, Arg151, His187, Tyr189, and Lys223 each contribute to the heme site.

This sequence belongs to the SFH5 family. Requires heme b as cofactor.

It is found in the cytoplasm. The protein localises to the endoplasmic reticulum membrane. Its subcellular location is the microsome membrane. The catalysed reaction is a 1,2-diacyl-sn-glycero-3-phospho-(1D-myo-inositol)(in) = a 1,2-diacyl-sn-glycero-3-phospho-(1D-myo-inositol)(out). Its function is as follows. Non-classical phosphatidylinositol (PtdIns) transfer protein (PITP), which exhibits PtdIns-binding/transfer activity in the absence of detectable PtdCho-binding/transfer activity. Regulates PtdIns(4,5)P2 homeostasis at the plasma membrane. Heme-binding protein that may play a role in organic oxidant-induced stress responses. This Cryptococcus neoformans var. neoformans serotype D (strain JEC21 / ATCC MYA-565) (Filobasidiella neoformans) protein is Phosphatidylinositol transfer protein SFH5 (SFH5).